A 309-amino-acid chain; its full sequence is Homoserine O-succinyltransferase (309 aa).

Cys-142 functions as the Acyl-thioester intermediate in the catalytic mechanism. Substrate is bound by residues Lys-163 and Ser-192. The active-site Proton acceptor is the His-235. Residue Glu-237 is part of the active site. Position 249 (Arg-249) interacts with substrate.

The protein belongs to the MetA family.

The protein resides in the cytoplasm. The catalysed reaction is L-homoserine + succinyl-CoA = O-succinyl-L-homoserine + CoA. The protein operates within amino-acid biosynthesis; L-methionine biosynthesis via de novo pathway; O-succinyl-L-homoserine from L-homoserine: step 1/1. Its function is as follows. Transfers a succinyl group from succinyl-CoA to L-homoserine, forming succinyl-L-homoserine. This Yersinia enterocolitica serotype O:8 / biotype 1B (strain NCTC 13174 / 8081) protein is Homoserine O-succinyltransferase.